The sequence spans 518 residues: Bifunctional methyltransferase (518 aa).

The segment at 1-300 (MQYSIKQILN…SHNRVIEISP (300 aa)) is hemK. The segment at 1–302 (MQYSIKQILN…NRVIEISPIN (302 aa)) is RF MTase. S-adenosyl-L-methionine is bound by residues 140–144 (GTGSG), Asp-163, Trp-192, Asn-207, Glu-347, Glu-372, Asn-399, and Asp-421. Position 207-210 (207-210 (NPPY)) interacts with substrate. The tract at residues 301–518 (INLNRSYARR…MILQHALTGH (218 aa)) is tRNA (guanine-N(7)-)-methyltransferase. The interval 305–518 (RSYARRIGKS…MILQHALTGH (214 aa)) is tRNA MTase. The active site involves Asp-421. The substrate site is built by Lys-425 and Asp-457.

In the C-terminal section; belongs to the class I-like SAM-binding methyltransferase superfamily. TrmB family. The protein in the N-terminal section; belongs to the protein N5-glutamine methyltransferase family. PrmC subfamily.

The enzyme catalyses L-glutaminyl-[peptide chain release factor] + S-adenosyl-L-methionine = N(5)-methyl-L-glutaminyl-[peptide chain release factor] + S-adenosyl-L-homocysteine + H(+). It carries out the reaction guanosine(46) in tRNA + S-adenosyl-L-methionine = N(7)-methylguanosine(46) in tRNA + S-adenosyl-L-homocysteine. In terms of biological role, methylates the class 1 translation termination release factors RF1/PrfA and RF2/PrfB on the glutamine residue of the universally conserved GGQ motif. Catalyzes the formation of N(7)-methylguanine at position 46 (m7G46) in tRNA. This is Bifunctional methyltransferase (prmC/trmB) from Rickettsia typhi (strain ATCC VR-144 / Wilmington).